A 357-amino-acid chain; its full sequence is 3-dehydroquinate synthase (357 aa).

NAD(+) contacts are provided by residues 99–103 (GATGD), 123–124 (TT), lysine 135, lysine 144, and 162–165 (FLET). 3 residues coordinate Zn(2+): glutamate 177, histidine 247, and histidine 261.

This sequence belongs to the sugar phosphate cyclases superfamily. Dehydroquinate synthase family. The cofactor is Co(2+). Requires Zn(2+) as cofactor. It depends on NAD(+) as a cofactor.

It is found in the cytoplasm. It carries out the reaction 7-phospho-2-dehydro-3-deoxy-D-arabino-heptonate = 3-dehydroquinate + phosphate. It participates in metabolic intermediate biosynthesis; chorismate biosynthesis; chorismate from D-erythrose 4-phosphate and phosphoenolpyruvate: step 2/7. In terms of biological role, catalyzes the conversion of 3-deoxy-D-arabino-heptulosonate 7-phosphate (DAHP) to dehydroquinate (DHQ). This is 3-dehydroquinate synthase from Macrococcus caseolyticus (strain JCSC5402) (Macrococcoides caseolyticum).